Reading from the N-terminus, the 261-residue chain is 4-hydroxy-tetrahydrodipicolinate reductase (261 aa).

Residues 13-18 (GMAGRM), 91-93 (GTS), and 115-118 (APNF) each bind NAD(+). Catalysis depends on His-149, which acts as the Proton donor/acceptor. His-150 contacts (S)-2,3,4,5-tetrahydrodipicolinate. Lys-153 acts as the Proton donor in catalysis. Residue 159-160 (GT) coordinates (S)-2,3,4,5-tetrahydrodipicolinate.

It belongs to the DapB family.

It is found in the cytoplasm. The enzyme catalyses (S)-2,3,4,5-tetrahydrodipicolinate + NAD(+) + H2O = (2S,4S)-4-hydroxy-2,3,4,5-tetrahydrodipicolinate + NADH + H(+). It catalyses the reaction (S)-2,3,4,5-tetrahydrodipicolinate + NADP(+) + H2O = (2S,4S)-4-hydroxy-2,3,4,5-tetrahydrodipicolinate + NADPH + H(+). The protein operates within amino-acid biosynthesis; L-lysine biosynthesis via DAP pathway; (S)-tetrahydrodipicolinate from L-aspartate: step 4/4. Catalyzes the conversion of 4-hydroxy-tetrahydrodipicolinate (HTPA) to tetrahydrodipicolinate. The protein is 4-hydroxy-tetrahydrodipicolinate reductase of Granulibacter bethesdensis (strain ATCC BAA-1260 / CGDNIH1).